We begin with the raw amino-acid sequence, 89 residues long: Small ribosomal subunit protein uS15 (89 aa).

The protein belongs to the universal ribosomal protein uS15 family. As to quaternary structure, part of the 30S ribosomal subunit. Forms a bridge to the 50S subunit in the 70S ribosome, contacting the 23S rRNA.

One of the primary rRNA binding proteins, it binds directly to 16S rRNA where it helps nucleate assembly of the platform of the 30S subunit by binding and bridging several RNA helices of the 16S rRNA. Its function is as follows. Forms an intersubunit bridge (bridge B4) with the 23S rRNA of the 50S subunit in the ribosome. This is Small ribosomal subunit protein uS15 from Sulfurovum sp. (strain NBC37-1).